We begin with the raw amino-acid sequence, 458 residues long: Argininosuccinate lyase (458 aa).

The protein belongs to the lyase 1 family. Argininosuccinate lyase subfamily.

The protein resides in the cytoplasm. The catalysed reaction is 2-(N(omega)-L-arginino)succinate = fumarate + L-arginine. Its pathway is amino-acid biosynthesis; L-arginine biosynthesis; L-arginine from L-ornithine and carbamoyl phosphate: step 3/3. This is Argininosuccinate lyase from Trichlorobacter lovleyi (strain ATCC BAA-1151 / DSM 17278 / SZ) (Geobacter lovleyi).